The sequence spans 236 residues: Phosphoribosylaminoimidazole-succinocarboxamide synthase (236 aa).

The protein belongs to the SAICAR synthetase family.

It catalyses the reaction 5-amino-1-(5-phospho-D-ribosyl)imidazole-4-carboxylate + L-aspartate + ATP = (2S)-2-[5-amino-1-(5-phospho-beta-D-ribosyl)imidazole-4-carboxamido]succinate + ADP + phosphate + 2 H(+). It participates in purine metabolism; IMP biosynthesis via de novo pathway; 5-amino-1-(5-phospho-D-ribosyl)imidazole-4-carboxamide from 5-amino-1-(5-phospho-D-ribosyl)imidazole-4-carboxylate: step 1/2. The protein is Phosphoribosylaminoimidazole-succinocarboxamide synthase (purC) of Lactococcus lactis subsp. lactis (strain IL1403) (Streptococcus lactis).